A 164-amino-acid chain; its full sequence is Phosphopantetheine adenylyltransferase (164 aa).

Residue serine 9 coordinates substrate. ATP contacts are provided by residues 9 to 10 and histidine 17; that span reads SF. Residues lysine 41, leucine 73, and lysine 87 each coordinate substrate. Residues 88–90, glutamate 98, and 123–129 each bind ATP; these read GLR and NSFLSSS.

This sequence belongs to the bacterial CoaD family. As to quaternary structure, homohexamer. Mg(2+) serves as cofactor.

The protein resides in the cytoplasm. It catalyses the reaction (R)-4'-phosphopantetheine + ATP + H(+) = 3'-dephospho-CoA + diphosphate. It participates in cofactor biosynthesis; coenzyme A biosynthesis; CoA from (R)-pantothenate: step 4/5. Reversibly transfers an adenylyl group from ATP to 4'-phosphopantetheine, yielding dephospho-CoA (dPCoA) and pyrophosphate. The polypeptide is Phosphopantetheine adenylyltransferase (Clostridium kluyveri (strain ATCC 8527 / DSM 555 / NBRC 12016 / NCIMB 10680 / K1)).